The chain runs to 496 residues: Lysine--tRNA ligase (496 aa).

Glu-405 and Glu-412 together coordinate Mg(2+).

It belongs to the class-II aminoacyl-tRNA synthetase family. In terms of assembly, homodimer. It depends on Mg(2+) as a cofactor.

It localises to the cytoplasm. The catalysed reaction is tRNA(Lys) + L-lysine + ATP = L-lysyl-tRNA(Lys) + AMP + diphosphate. This Vesicomyosocius okutanii subsp. Calyptogena okutanii (strain HA) protein is Lysine--tRNA ligase.